Here is a 191-residue protein sequence, read N- to C-terminus: Negative modulator of initiation of replication (191 aa).

The interaction with DNA stretch occupies residues 96–97; the sequence is AV.

The protein belongs to the SeqA family. As to quaternary structure, homodimer. Polymerizes to form helical filaments.

It is found in the cytoplasm. Its function is as follows. Negative regulator of replication initiation, which contributes to regulation of DNA replication and ensures that replication initiation occurs exactly once per chromosome per cell cycle. Binds to pairs of hemimethylated GATC sequences in the oriC region, thus preventing assembly of replication proteins and re-initiation at newly replicated origins. Repression is relieved when the region becomes fully methylated. The sequence is that of Negative modulator of initiation of replication from Shewanella amazonensis (strain ATCC BAA-1098 / SB2B).